Consider the following 478-residue polypeptide: DNA gyrase subunit B (478 aa).

Residues 319–438 (CELYLVEGDS…GGHVYIAQPP (120 aa)) form the Toprim domain. Mg(2+) is bound by residues Glu-325, Asp-403, and Asp-405.

Belongs to the type II topoisomerase GyrB family. Heterotetramer, composed of two GyrA and two GyrB chains. In the heterotetramer, GyrA contains the active site tyrosine that forms a transient covalent intermediate with DNA, while GyrB binds cofactors and catalyzes ATP hydrolysis. The cofactor is Mg(2+). Mn(2+) is required as a cofactor. Requires Ca(2+) as cofactor.

The protein localises to the cytoplasm. The catalysed reaction is ATP-dependent breakage, passage and rejoining of double-stranded DNA.. Functionally, a type II topoisomerase that negatively supercoils closed circular double-stranded (ds) DNA in an ATP-dependent manner to modulate DNA topology and maintain chromosomes in an underwound state. Negative supercoiling favors strand separation, and DNA replication, transcription, recombination and repair, all of which involve strand separation. Also able to catalyze the interconversion of other topological isomers of dsDNA rings, including catenanes and knotted rings. Type II topoisomerases break and join 2 DNA strands simultaneously in an ATP-dependent manner. The polypeptide is DNA gyrase subunit B (gyrB) (Cytophaga hutchinsonii).